The sequence spans 765 residues: Proton-coupled zinc antiporter SLC30A5 (765 aa).

An N-acetylmethionine modification is found at M1. Residues 1–32 (MEEKYGGDVLAGPGGGGGLGPVDVPSARLTKY) are Cytoplasmic-facing. The helical transmembrane segment at 33–53 (IVLLCFTKFLKAVGLFESYDL) threads the bilayer. The Lumenal segment spans residues 54–56 (LKA). A helical transmembrane segment spans residues 57–77 (VHIVQFIFILKLGTAFFMVLF). The Cytoplasmic portion of the chain corresponds to 78-98 (QKPFSSGKTITKHQWIKIFKH). A helical membrane pass occupies residues 99-119 (AVAGCIISLLWFFGLTLCGPL). A topological domain (lumenal) is located at residue R120. A helical transmembrane segment spans residues 121–141 (TLLLFEHSDIVVISLLSVLFT). Residues 142-152 (SSGGGPAKTRG) are Cytoplasmic-facing. Residues 153–173 (AAFFIIAVICLLLFDNDDLMA) traverse the membrane as a helical segment. Topologically, residues 174 to 193 (KMAEHPEGHHDSALTHMLYT) are lumenal. The helical transmembrane segment at 194–214 (AIAFLGVADHKGGVLLLVLAL) threads the bilayer. Topologically, residues 215–238 (CCKVGFHTASRKLSVDVGGAKRLQ) are cytoplasmic. A helical transmembrane segment spans residues 239–259 (ALSHLVSVLLLCPWVIVLSVT). The Lumenal segment spans residues 260-267 (TESKVESW). Residues 268-288 (FSLIMPFATVIFFVMILDFYV) form a helical membrane-spanning segment. Residues 289–303 (DSICSVKMEVSKCAR) are Cytoplasmic-facing. Residues 304-324 (YGSFPIFISALLFGNFWTHPI) form a helical membrane-spanning segment. Topologically, residues 325–342 (TDQLRAMNKAAHQESTEH) are lumenal. The chain crosses the membrane as a helical span at residues 343–363 (VLSGGVVVSAIFFILSANILS). Residues 364–418 (SPSKRGQKGTLIGYSPEGTPLYNFMGDAFQHSSQSIPRFIKESLKQILEESDSRQ) are Cytoplasmic-facing. The chain crosses the membrane as a helical span at residues 419 to 439 (IFYFLCLNLLFTFVELFYGVL). The mediates homodimerization with SLC30A6 stretch occupies residues 420–640 (FYFLCLNLLF…ILIFLSVVPL (221 aa)). Residues 440-448 (TNSLGLISD) are Lumenal-facing. Residues 449–469 (GFHMLFDCSALVMGLFAALMS) traverse the membrane as a helical segment. H451 and D455 together coordinate Zn(2+). Topologically, residues 470–483 (RWKATRIFSYGYGR) are cytoplasmic. A helical transmembrane segment spans residues 484–504 (IEILSGFINGLFLIVIAFFVF). Residues 505–520 (MESVARLIDPPELDTH) are Lumenal-facing. Residues 521-541 (MLTPVSVGGLIVNLIGICAFS) form a helical membrane-spanning segment. The segment at 542-578 (HAHSHAHGASQGSCHSSDHSHSHHMHGHSDHGHGHSH) is his-rich loop; required for zinc transport. At 542-592 (HAHSHAHGASQGSCHSSDHSHSHHMHGHSDHGHGHSHGSAGGGMNANMRGV) the chain is on the cytoplasmic side. The interval 551 to 581 (SQGSCHSSDHSHSHHMHGHSDHGHGHSHGSA) is disordered. A helical transmembrane segment spans residues 593-613 (FLHVLADTLGSIGVIVSTVLI). Zn(2+) contacts are provided by H595 and D599. Over 614–617 (EQFG) the chain is Lumenal. A helical transmembrane segment spans residues 618-638 (WFIADPLCSLFIAILIFLSVV). Topologically, residues 639-765 (PLIKDACQVL…KYCKDGTYIM (127 aa)) are cytoplasmic.

Belongs to the cation diffusion facilitator (CDF) transporter (TC 2.A.4) family. SLC30A subfamily. In terms of assembly, heterodimer with SLC30A6/ZNT6; form a functional zinc ion transmembrane transporter. In terms of processing, could homodimerize through the formation of dityrosine bonds upon oxidative stress. As to expression, ubiquitously expressed. Highly expressed in pancreas, liver and kidney. Expressed abundantly in insulin-containing beta cells, undetectable in other endocrine cell types including glucagon-secreting alpha cells and most acinar cells (at protein level).

The protein localises to the golgi apparatus. It is found in the golgi stack membrane. Its subcellular location is the cytoplasmic vesicle. The protein resides in the COPII-coated vesicle membrane. It localises to the secretory vesicle membrane. The protein localises to the trans-Golgi network membrane. It is found in the endoplasmic reticulum membrane. Its subcellular location is the cell membrane. The protein resides in the apical cell membrane. It carries out the reaction Zn(2+)(in) + 2 H(+)(out) = Zn(2+)(out) + 2 H(+)(in). Functionally, together with SLC30A6 forms a functional proton-coupled zinc ion antiporter mediating zinc entry into the lumen of organelles along the secretory pathway. By contributing to zinc ion homeostasis within the early secretory pathway, regulates the activation and folding of enzymes like alkaline phosphatases and enzymes involved in phosphatidylinositol glycan anchor biosynthesis. Through the transport of zinc into secretory granules of pancreatic beta-cells, plays an important role in the storage and secretion of insulin. In terms of biological role, zinc ion:proton antiporter mediating influx and efflux of zinc at the plasma membrane. This Homo sapiens (Human) protein is Proton-coupled zinc antiporter SLC30A5.